The chain runs to 314 residues: Ribose-phosphate pyrophosphokinase (314 aa).

ATP-binding positions include 37 to 39 (DGE) and 96 to 97 (RQ). Mg(2+) contacts are provided by His-131 and Asp-170. Lys-194 is an active-site residue. Residues Arg-196, Asp-220, and 224-228 (DTGGT) each bind D-ribose 5-phosphate.

The protein belongs to the ribose-phosphate pyrophosphokinase family. Class I subfamily. Homohexamer. Mg(2+) serves as cofactor.

The protein localises to the cytoplasm. The enzyme catalyses D-ribose 5-phosphate + ATP = 5-phospho-alpha-D-ribose 1-diphosphate + AMP + H(+). The protein operates within metabolic intermediate biosynthesis; 5-phospho-alpha-D-ribose 1-diphosphate biosynthesis; 5-phospho-alpha-D-ribose 1-diphosphate from D-ribose 5-phosphate (route I): step 1/1. Its function is as follows. Involved in the biosynthesis of the central metabolite phospho-alpha-D-ribosyl-1-pyrophosphate (PRPP) via the transfer of pyrophosphoryl group from ATP to 1-hydroxyl of ribose-5-phosphate (Rib-5-P). In Vibrio cholerae serotype O1 (strain ATCC 39315 / El Tor Inaba N16961), this protein is Ribose-phosphate pyrophosphokinase.